The sequence spans 179 residues: Large ribosomal subunit protein uL5 (179 aa).

It belongs to the universal ribosomal protein uL5 family. Part of the 50S ribosomal subunit; part of the 5S rRNA/L5/L18/L25 subcomplex. Contacts the 5S rRNA and the P site tRNA. Forms a bridge to the 30S subunit in the 70S ribosome.

Its function is as follows. This is one of the proteins that bind and probably mediate the attachment of the 5S RNA into the large ribosomal subunit, where it forms part of the central protuberance. In the 70S ribosome it contacts protein S13 of the 30S subunit (bridge B1b), connecting the 2 subunits; this bridge is implicated in subunit movement. Contacts the P site tRNA; the 5S rRNA and some of its associated proteins might help stabilize positioning of ribosome-bound tRNAs. The protein is Large ribosomal subunit protein uL5 of Solidesulfovibrio magneticus (strain ATCC 700980 / DSM 13731 / RS-1) (Desulfovibrio magneticus).